The sequence spans 135 residues: ATP synthase epsilon chain (135 aa).

A compositionally biased stretch (basic and acidic residues) spans 90-103; it reads DVRRAESAKERAES. The interval 90-115 is disordered; it reads DVRRAESAKERAESHLNNNDEDTDIN.

This sequence belongs to the ATPase epsilon chain family. As to quaternary structure, F-type ATPases have 2 components, CF(1) - the catalytic core - and CF(0) - the membrane proton channel. CF(1) has five subunits: alpha(3), beta(3), gamma(1), delta(1), epsilon(1). CF(0) has three main subunits: a, b and c.

Its subcellular location is the cell membrane. Functionally, produces ATP from ADP in the presence of a proton gradient across the membrane. This chain is ATP synthase epsilon chain, found in Staphylococcus carnosus (strain TM300).